A 333-amino-acid polypeptide reads, in one-letter code: MGIRVAVAGASGYAGGELLRLITGHPEFDLVAATAHSQAGHRLDTVHPQLTGLELVLAETDPAALADADLVFLALPHGESATLAAQLPPKVRVVDLGADHRLADPYAWANYYGGTHAGQWTYGLPELPGQRERIAATTRVANPGCYASAIVLALAPLIAAGAAQPADVVVVAASGASGAGRAAKAHLIAGEVMGDLSPYRVGAHQHVPEIKQATGATSLSFTPVLAPMPRGILATVTAVPVRDVDPQAVLAEAYADAPFVHVLPEGRWPHTAATLGSNSCHLQATVDVDAGRLIVVSGLDNLGRGAAGQAVQNANIMLGLPETTGLSVWGVSP.

Cys-145 is a catalytic residue.

This sequence belongs to the NAGSA dehydrogenase family. Type 1 subfamily.

It is found in the cytoplasm. The enzyme catalyses N-acetyl-L-glutamate 5-semialdehyde + phosphate + NADP(+) = N-acetyl-L-glutamyl 5-phosphate + NADPH + H(+). It functions in the pathway amino-acid biosynthesis; L-arginine biosynthesis; N(2)-acetyl-L-ornithine from L-glutamate: step 3/4. Its function is as follows. Catalyzes the NADPH-dependent reduction of N-acetyl-5-glutamyl phosphate to yield N-acetyl-L-glutamate 5-semialdehyde. The chain is N-acetyl-gamma-glutamyl-phosphate reductase from Salinispora tropica (strain ATCC BAA-916 / DSM 44818 / JCM 13857 / NBRC 105044 / CNB-440).